The chain runs to 448 residues: Tubulin beta chain (448 aa).

GTP is bound by residues Gln-11, Glu-69, Ser-138, Gly-142, Thr-143, Gly-144, Asn-204, and Asn-226. Glu-69 is a binding site for Mg(2+). Residues 425–448 (YQDASISEGEEEYLEEEEPLEHEE) are disordered. Acidic residues predominate over residues 432 to 448 (EGEEEYLEEEEPLEHEE).

The protein belongs to the tubulin family. As to quaternary structure, dimer of alpha and beta chains. A typical microtubule is a hollow water-filled tube with an outer diameter of 25 nm and an inner diameter of 15 nM. Alpha-beta heterodimers associate head-to-tail to form protofilaments running lengthwise along the microtubule wall with the beta-tubulin subunit facing the microtubule plus end conferring a structural polarity. Microtubules usually have 13 protofilaments but different protofilament numbers can be found in some organisms and specialized cells. The cofactor is Mg(2+).

The protein localises to the cytoplasm. It is found in the cytoskeleton. Its function is as follows. Tubulin is the major constituent of microtubules, a cylinder consisting of laterally associated linear protofilaments composed of alpha- and beta-tubulin heterodimers. Microtubules grow by the addition of GTP-tubulin dimers to the microtubule end, where a stabilizing cap forms. Below the cap, tubulin dimers are in GDP-bound state, owing to GTPase activity of alpha-tubulin. The protein is Tubulin beta chain (benA56) of Aspergillus oryzae (strain ATCC 42149 / RIB 40) (Yellow koji mold).